We begin with the raw amino-acid sequence, 124 residues long: uncharacterized protein (124 aa).

The first 22 residues, 1–22 (MGTSSVLLMIASSLILLEVVMT), serve as a signal peptide directing secretion.

This is an uncharacterized protein from Caenorhabditis elegans.